The sequence spans 116 residues: MSEVVQSVDPINFTEAASLKVKELIEEEGDNSLSLRVYITGGGCSGFQYAFAFDNEVKEDDMVITKNGVRLLVDSMSFQYLVGADVDYKDDVEGAYFVIRNPNAKTTCGCGSSFSV.

Iron-sulfur cluster contacts are provided by C44, C108, and C110.

The protein belongs to the HesB/IscA family. In terms of assembly, homodimer. Iron-sulfur cluster serves as cofactor.

Its function is as follows. Required for insertion of 4Fe-4S clusters for at least IspG. The sequence is that of Iron-sulfur cluster insertion protein ErpA from Francisella tularensis subsp. mediasiatica (strain FSC147).